Consider the following 842-residue polypeptide: Protein P (842 aa).

Positions 1–177 are terminal protein domain (TP); that stretch reads MPLSYQHFRR…FCGSPYTWEQ (177 aa). The spacer stretch occupies residues 178–345; that stretch reads DLQHGAFLDG…YCLSHLVNLL (168 aa). A disordered region spans residues 184 to 238; that stretch reads FLDGPSRVGKEPFRQQSSRIPSRSPVGPSIQSKYQQSRLGLQSQKGPLARGQQGR. Over residues 197–208 the composition is skewed to low complexity; it reads RQQSSRIPSRSP. Residues 212-228 are compositionally biased toward polar residues; that stretch reads SIQSKYQQSRLGLQSQK. The tract at residues 346 to 689 is polymerase/reverse transcriptase domain (RT); that stretch reads QDWGPCTEHG…YMNLYPVARQ (344 aa). The Reverse transcriptase domain occupies 356-599; that stretch reads EHHIRIPRTP…YSLNFMGYVI (244 aa). Positions 428, 550, and 551 each coordinate Mg(2+).

Belongs to the hepadnaviridae P protein family.

The enzyme catalyses DNA(n) + a 2'-deoxyribonucleoside 5'-triphosphate = DNA(n+1) + diphosphate. The catalysed reaction is Endonucleolytic cleavage to 5'-phosphomonoester.. Its activity is regulated as follows. Activated by host HSP70 and HSP40 in vitro to be able to bind the epsilon loop of the pgRNA. Because deletion of the RNase H region renders the protein partly chaperone-independent, the chaperones may be needed indirectly to relieve occlusion of the RNA-binding site by this domain. Inhibited by several reverse-transcriptase inhibitors: Lamivudine, Adefovir and Entecavir. In terms of biological role, multifunctional enzyme that converts the viral RNA genome into dsDNA in viral cytoplasmic capsids. This enzyme displays a DNA polymerase activity that can copy either DNA or RNA templates, and a ribonuclease H (RNase H) activity that cleaves the RNA strand of RNA-DNA heteroduplexes in a partially processive 3'- to 5'-endonucleasic mode. Neo-synthesized pregenomic RNA (pgRNA) are encapsidated together with the P protein, and reverse-transcribed inside the nucleocapsid. Initiation of reverse-transcription occurs first by binding the epsilon loop on the pgRNA genome, and is initiated by protein priming, thereby the 5'-end of (-)DNA is covalently linked to P protein. Partial (+)DNA is synthesized from the (-)DNA template and generates the relaxed circular DNA (RC-DNA) genome. After budding and infection, the RC-DNA migrates in the nucleus, and is converted into a plasmid-like covalently closed circular DNA (cccDNA). The activity of P protein does not seem to be necessary for cccDNA generation, and is presumably released from (+)DNA by host nuclear DNA repair machinery. The sequence is that of Protein P from Hepatitis B virus genotype G (isolate IG29227/2000) (HBV-G).